Consider the following 382-residue polypeptide: TAGYEDEPSHTVTTVIVPHNAKSGQLVNYLAYIDSNGAQCAPSYSMRQGSKFLNDDLLNYQQLLFSTFLNEGWILTIPDYQGPQRAFAAGRLEGRMSLDGIRAALNFGEIGLEKNTSVVTYGYSGGAIASGWTAALQASYAPEINAIGFAMGGTPANVTSTVQSLDKGVFSGLCVAGITGIIYAYQVVQDWFQNHLYPKGNDAIEYARSHCITDIFSRYPFSHVFSDDFFRNGSSILYDPTIQSVISDIVLGLKESETPKAPVYMFHSQHDEIVPFSDARKTSHNWAKHGADVFFQEFSDLPIGHALSEITNIPNSLFFVRDRFAGKPFPKGYTRKVTGNGLEEPNASLAGLGELVRAIQDIQGREVGPADSELKQFILDRN.

Residues C40 and C211 are joined by a disulfide bond. A glycan (N-linked (GlcNAc...) asparagine) is linked at N115. The active-site Nucleophile is S124. 2 N-linked (GlcNAc...) asparagine glycosylation sites follow: N157 and N232. Active-site residues include D271 and H305. N-linked (GlcNAc...) asparagine glycosylation is present at N346.

This sequence belongs to the AB hydrolase superfamily. Lipase family. Class Lip subfamily.

The protein resides in the secreted. The catalysed reaction is a triacylglycerol + H2O = a diacylglycerol + a fatty acid + H(+). It catalyses the reaction a monoacylglycerol + H2O = glycerol + a fatty acid + H(+). The enzyme catalyses a diacylglycerol + H2O = a monoacylglycerol + a fatty acid + H(+). Secreted lipase that hydrolyzes acylglycerol lipids such as triacylglycerols and consequently releases free fatty acid. Can hydrolyze 4-nitrophenyl palmitate to release 4-nitrophenol and palmitoic acid. Due to an absence of fatty acid synthase genes in Malassezia species, secretory lipases are essential for the yeast to generate free fatty acids from degradation of sebum and assimilate them as lipid sources for growth. Plays important roles not only in lipid metabolism but also in the immune response of host cells and pathogenesis. The sequence is that of Secreted triacylglycerol lipase LIP5 from Malassezia furfur (Pityriasis versicolor infection agent).